The sequence spans 404 residues: Sorting nexin-5 (404 aa).

Residue Ala-2 is modified to N-acetylalanine. One can recognise a PX domain in the interval 25–172; that stretch reads LNVDPSLQID…HVFLEYDQDL (148 aa). A 1,2-diacyl-sn-glycero-3-phospho-(1D-myo-inositol-4,5-bisphosphate) is bound by residues 40–46, 99–105, and 113–116; these read SERDKVK, FDGPREK, and EGSM. The tract at residues 169 to 261 is interaction with DOCK1; sequence DQDLSVRRKN…HSLALEEPTV (93 aa). Residues 183–200 are membrane-binding amphipathic helix; the sequence is FGGFFKSVVKSADEVLFS. A Phosphoserine modification is found at Ser-193. Residues 202-404 form the BAR domain; that stretch reads VKEVDDFFEQ…QSCIDLFKNN (203 aa). N6-acetyllysine is present on Lys-275.

Belongs to the sorting nexin family. As to quaternary structure, forms heterodimers with BAR domain-containing sorting nexins SNX1 and SNX2; does not homodimerize. The heterodimers are proposed to self-assemble into helical arrays on the membrane to stabilize and expand local membrane curvature underlying endosomal tubule formation. Thought to be a component of the originally described retromer complex (also called SNX-BAR retromer) which is a pentamer containing the heterotrimeric retromer cargo-selective complex (CSC), also described as vacuolar protein sorting subcomplex (VPS), and a heterodimeric membrane-deforming subcomplex formed between SNX1 or SNX2 and SNX5 or SNX6 (also called SNX-BAR subcomplex); the respective CSC and SNX-BAR subcomplexes associate with low affinity. Interacts with SNX1, SNX2, VPS26A, VPS29, VPS35, DCTN1, DOCK1, MIB1, PIP5K1C. Interacts with HGS; increased by PIP5K1C kinase activity and by PtdIns(3P) and/or PtdIns(3,4)P2. As to expression, detected in macrophages (at protein level).

It localises to the endosome. The protein localises to the early endosome. Its subcellular location is the early endosome membrane. The protein resides in the cell membrane. It is found in the cytoplasmic vesicle membrane. It localises to the cytoplasm. The protein localises to the cell projection. Its subcellular location is the phagocytic cup. The protein resides in the ruffle. Its function is as follows. Involved in several stages of intracellular trafficking. Interacts with membranes containing phosphatidylinositol lipids. Acts in part as component of the retromer membrane-deforming SNX-BAR subcomplex. The SNX-BAR retromer mediates retrograde transport of cargo proteins from endosomes to the trans-Golgi network (TGN) and is involved in endosome-to-plasma membrane transport for cargo protein recycling. The SNX-BAR subcomplex functions to deform the donor membrane into a tubular profile called endosome-to-TGN transport carrier (ETC). Does not have in vitro vesicle-to-membrane remodeling activity. Involved in retrograde transport of lysosomal enzyme receptor IGF2R. May function as link between endosomal transport vesicles and dynactin. Plays a role in the internalization of EGFR after EGF stimulation. Involved in EGFR endosomal sorting and degradation; the function involves PIP5K1C and is retromer-independent. Together with PIP5K1C facilitates HGS interaction with ubiquitinated EGFR, which initiates EGFR sorting to intraluminal vesicles (ILVs) of the multivesicular body for subsequent lysosomal degradation. Involved in E-cadherin sorting and degradation; inhibits PIP5K1C-mediated E-cadherin degradation. Plays a role in macropinocytosis. The sequence is that of Sorting nexin-5 (Snx5) from Mus musculus (Mouse).